A 430-amino-acid polypeptide reads, in one-letter code: Tyrosine--tRNA ligase (430 aa).

Y32 contacts L-tyrosine. The 'HIGH' region motif lies at 37 to 46 (PTADSLHIGH). L-tyrosine is bound by residues Y172 and Q176. Positions 232-236 (KFGKT) match the 'KMSKS' region motif. An ATP-binding site is contributed by K235. The region spanning 362–429 (VKAVDLFVDN…GKKNYYLIIA (68 aa)) is the S4 RNA-binding domain.

This sequence belongs to the class-I aminoacyl-tRNA synthetase family. TyrS type 1 subfamily. As to quaternary structure, homodimer.

It is found in the cytoplasm. The catalysed reaction is tRNA(Tyr) + L-tyrosine + ATP = L-tyrosyl-tRNA(Tyr) + AMP + diphosphate + H(+). Functionally, catalyzes the attachment of tyrosine to tRNA(Tyr) in a two-step reaction: tyrosine is first activated by ATP to form Tyr-AMP and then transferred to the acceptor end of tRNA(Tyr). The polypeptide is Tyrosine--tRNA ligase (Bacteroides fragilis (strain YCH46)).